The chain runs to 460 residues: Putative E3 ubiquitin-protein ligase RING1b (460 aa).

Positions 1-85 are disordered; the sequence is MPSLKSFSAA…SQSSSAGELS (85 aa). Residues 21-31 are compositionally biased toward basic and acidic residues; that stretch reads SEAERFNPEAV. Acidic residues-rich tracts occupy residues 32 to 51 and 59 to 71; these read EKEE…DEED and EAED…EEED. The RING-type zinc-finger motif lies at 103-143; the sequence is CSICLGIIRKTRTVMECLHRFCRECIDKSMRLGNNECPTCR. Residues 196–300 form a disordered region; sequence QVSQRQSKAL…TEQTHQRDSR (105 aa). The segment covering 220 to 234 has biased composition (basic residues); it reads RSRRSGGGSRRRRNC. A compositionally biased stretch (acidic residues) spans 240–249; that stretch reads DTSEANDDDD. Over residues 250–265 the composition is skewed to basic and acidic residues; sequence QNKRGKDSSSDEPCER. Over residues 276–290 the composition is skewed to low complexity; the sequence is SSSNANNNDNCAGNG.

In terms of assembly, heterodimer with RING1A. Interacts with CLF. Component of the PRC1-like complex, at least composed of RING1A, RING1B and LHP1.

It localises to the nucleus. The enzyme catalyses S-ubiquitinyl-[E2 ubiquitin-conjugating enzyme]-L-cysteine + [acceptor protein]-L-lysine = [E2 ubiquitin-conjugating enzyme]-L-cysteine + N(6)-ubiquitinyl-[acceptor protein]-L-lysine.. The protein operates within protein modification; protein ubiquitination. Putative E3 ubiquitin-protein ligase that mediates monoubiquitination of 'Lys-119' of histone H2A (H2AK119ub), thereby playing a central role in histone code and gene regulation. Functionally, as part of the PRC1-like complex, repress class I KNOX gene expression. PcG PRC1 complex maintains the transcriptionally repressive state of many genes, including Hox genes, throughout development. PcG PRC1 complex acts via chromatin remodeling and modification of histones, rendering chromatin heritably changed in its expressibility. The chain is Putative E3 ubiquitin-protein ligase RING1b (RING1B) from Arabidopsis thaliana (Mouse-ear cress).